We begin with the raw amino-acid sequence, 318 residues long: Aspartate carbamoyltransferase catalytic subunit (318 aa).

Carbamoyl phosphate is bound by residues Arg64 and Thr65. Residue Lys92 participates in L-aspartate binding. Carbamoyl phosphate contacts are provided by Arg114, His142, and Gln145. L-aspartate-binding residues include Arg175 and Arg229. 2 residues coordinate carbamoyl phosphate: Gly270 and Pro271.

The protein belongs to the aspartate/ornithine carbamoyltransferase superfamily. ATCase family. As to quaternary structure, heterododecamer (2C3:3R2) of six catalytic PyrB chains organized as two trimers (C3), and six regulatory PyrI chains organized as three dimers (R2).

It carries out the reaction carbamoyl phosphate + L-aspartate = N-carbamoyl-L-aspartate + phosphate + H(+). The protein operates within pyrimidine metabolism; UMP biosynthesis via de novo pathway; (S)-dihydroorotate from bicarbonate: step 2/3. Functionally, catalyzes the condensation of carbamoyl phosphate and aspartate to form carbamoyl aspartate and inorganic phosphate, the committed step in the de novo pyrimidine nucleotide biosynthesis pathway. The sequence is that of Aspartate carbamoyltransferase catalytic subunit from Rhodospirillum centenum (strain ATCC 51521 / SW).